The following is a 219-amino-acid chain: EP300-interacting inhibitor of differentiation 2 (219 aa).

The segment at 1-71 is disordered; that stretch reads MSELPADQGV…PVPEAREGPM (71 aa). Positions 20–34 are enriched in basic and acidic residues; it reads GDVRQAEVGGRRREP. Arginine 75 is subject to Omega-N-methylarginine. The segment at 95–115 is disordered; it reads AEPAEEEGPEGRPRSRPGNGP.

In terms of assembly, heterodimer with EID2B. Interacts with the C-terminus of EP300. Interacts with HDAC1 and HDAC2. Interacts with SMAD2, SMAD4 and with the MH2 domain of SMAD3.

The protein resides in the nucleus. Its function is as follows. Interacts with EP300 and acts as a repressor of MYOD-dependent transcription and muscle differentiation. Inhibits EP300 histone acetyltransferase activity. Acts as a repressor of TGFB/SMAD transcriptional responses. May act as a repressor of the TGFB/SMAD3-dependent signaling by selectively blocking formation of TGFB-induced SMAD3-SMAD4 complex. The chain is EP300-interacting inhibitor of differentiation 2 from Bos taurus (Bovine).